The chain runs to 270 residues: tRNA pseudouridine synthase A (270 aa).

Aspartate 60 functions as the Nucleophile in the catalytic mechanism. Tyrosine 118 contributes to the substrate binding site.

Belongs to the tRNA pseudouridine synthase TruA family. In terms of assembly, homodimer.

It carries out the reaction uridine(38/39/40) in tRNA = pseudouridine(38/39/40) in tRNA. Formation of pseudouridine at positions 38, 39 and 40 in the anticodon stem and loop of transfer RNAs. The protein is tRNA pseudouridine synthase A of Salmonella arizonae (strain ATCC BAA-731 / CDC346-86 / RSK2980).